Reading from the N-terminus, the 87-residue chain is Cell division topological specificity factor (87 aa).

The protein belongs to the MinE family.

Its function is as follows. Prevents the cell division inhibition by proteins MinC and MinD at internal division sites while permitting inhibition at polar sites. This ensures cell division at the proper site by restricting the formation of a division septum at the midpoint of the long axis of the cell. This chain is Cell division topological specificity factor, found in Clostridium botulinum (strain ATCC 19397 / Type A).